The sequence spans 445 residues: Glutamyl-tRNA reductase (445 aa).

Residues 49–52 (TCNR), serine 109, 114–116 (ETQ), and glutamine 120 each bind substrate. Catalysis depends on cysteine 50, which acts as the Nucleophile. 189-194 (GAGEMS) is an NADP(+) binding site.

This sequence belongs to the glutamyl-tRNA reductase family. As to quaternary structure, homodimer.

It catalyses the reaction (S)-4-amino-5-oxopentanoate + tRNA(Glu) + NADP(+) = L-glutamyl-tRNA(Glu) + NADPH + H(+). Its pathway is porphyrin-containing compound metabolism; protoporphyrin-IX biosynthesis; 5-aminolevulinate from L-glutamyl-tRNA(Glu): step 1/2. Catalyzes the NADPH-dependent reduction of glutamyl-tRNA(Glu) to glutamate 1-semialdehyde (GSA). The chain is Glutamyl-tRNA reductase from Staphylococcus carnosus (strain TM300).